The following is a 153-amino-acid chain: Regulator of sigma D (153 aa).

This sequence belongs to the Rsd/AlgQ family. In terms of assembly, interacts with RpoD.

The protein resides in the cytoplasm. Binds RpoD and negatively regulates RpoD-mediated transcription activation by preventing the interaction between the primary sigma factor RpoD with the catalytic core of the RNA polymerase and with promoter DNA. May be involved in replacement of the RNA polymerase sigma subunit from RpoD to RpoS during the transition from exponential growth to the stationary phase. This is Regulator of sigma D from Pectobacterium atrosepticum (strain SCRI 1043 / ATCC BAA-672) (Erwinia carotovora subsp. atroseptica).